We begin with the raw amino-acid sequence, 199 residues long: MSLTPVTLASQSSARQMILKNAGVAFEAVSPGVDEDAAKAGLLAEDVTPRDIADALAEMKAVKVSTKRPGLVIGADQTLDLKGRLIDKAGSLDEARARLLELRGTTHKLHSAVVVARDGRPIWRIVESAKLSVRPFSDAWLDRYIERRGEALLWSVGCYELESEGVQLFDKIEGDYFTILGLPLVGLLDFLRLHGALTV.

Aspartate 76 acts as the Proton acceptor in catalysis.

The protein belongs to the Maf family. Requires a divalent metal cation as cofactor.

Its subcellular location is the cytoplasm. It catalyses the reaction a ribonucleoside 5'-triphosphate + H2O = a ribonucleoside 5'-phosphate + diphosphate + H(+). The catalysed reaction is a 2'-deoxyribonucleoside 5'-triphosphate + H2O = a 2'-deoxyribonucleoside 5'-phosphate + diphosphate + H(+). Nucleoside triphosphate pyrophosphatase. May have a dual role in cell division arrest and in preventing the incorporation of modified nucleotides into cellular nucleic acids. The protein is Nucleoside triphosphate pyrophosphatase of Caulobacter vibrioides (strain ATCC 19089 / CIP 103742 / CB 15) (Caulobacter crescentus).